We begin with the raw amino-acid sequence, 244 residues long: Type III pantothenate kinase (244 aa).

ATP is bound at residue 12 to 19 (VVGNTHVR). Substrate-binding positions include Tyr79 and 83-86 (GLDR). The Proton acceptor role is filled by Asp85. Position 105 (Asp105) interacts with K(+). An ATP-binding site is contributed by Thr108. Substrate is bound at residue Thr163.

The protein belongs to the type III pantothenate kinase family. In terms of assembly, homodimer. The cofactor is NH4(+). It depends on K(+) as a cofactor.

Its subcellular location is the cytoplasm. The catalysed reaction is (R)-pantothenate + ATP = (R)-4'-phosphopantothenate + ADP + H(+). It functions in the pathway cofactor biosynthesis; coenzyme A biosynthesis; CoA from (R)-pantothenate: step 1/5. In terms of biological role, catalyzes the phosphorylation of pantothenate (Pan), the first step in CoA biosynthesis. The polypeptide is Type III pantothenate kinase (Synechococcus sp. (strain JA-3-3Ab) (Cyanobacteria bacterium Yellowstone A-Prime)).